Consider the following 334-residue polypeptide: Malate dehydrogenase (334 aa).

17–23 lines the NAD(+) pocket; the sequence is GAAGQIG. The substrate site is built by Arg98 and Arg104. Residues Asn111, Gln118, and 135-137 contribute to the NAD(+) site; that span reads VGN. Residues Asn137 and Arg168 each contribute to the substrate site. The Proton acceptor role is filled by His193.

The protein belongs to the LDH/MDH superfamily. MDH type 2 family.

It carries out the reaction (S)-malate + NAD(+) = oxaloacetate + NADH + H(+). Functionally, catalyzes the reversible oxidation of malate to oxaloacetate. The chain is Malate dehydrogenase from Deinococcus geothermalis (strain DSM 11300 / CIP 105573 / AG-3a).